The sequence spans 1052 residues: Eukaryotic translation initiation factor 3 subunit A (1052 aa).

In terms of domain architecture, PCI spans 325 to 505; the sequence is IQYAASAVLL…GSLHFNNNIF (181 aa). Coiled-coil stretches lie at residues 568–712 and 769–882; these read REHV…RLRE and EKTA…SAQT. 2 stretches are compositionally biased toward basic and acidic residues: residues 570 to 600 and 793 to 874; these read HVSN…EQMQ and KIRL…EQEK. Disordered stretches follow at residues 570–606 and 793–1052; these read HVSN…HQNQ and KIRL…DDKN. Composition is skewed to polar residues over residues 875–887 and 895–906; these read LSNL…QPTW and APTTAAPSSMRV. 4 stretches are compositionally biased toward basic and acidic residues: residues 942-952, 960-970, 979-1013, and 1037-1052; these read DRGDRAPRDTG, RAPR…ERRA, and GSER…DDKN.

It belongs to the eIF-3 subunit A family. Component of the eukaryotic translation initiation factor 3 (eIF-3) complex.

It localises to the cytoplasm. Its function is as follows. RNA-binding component of the eukaryotic translation initiation factor 3 (eIF-3) complex, which is involved in protein synthesis of a specialized repertoire of mRNAs and, together with other initiation factors, stimulates binding of mRNA and methionyl-tRNAi to the 40S ribosome. The eIF-3 complex specifically targets and initiates translation of a subset of mRNAs involved in cell proliferation. In Monosiga brevicollis (Choanoflagellate), this protein is Eukaryotic translation initiation factor 3 subunit A.